The sequence spans 699 residues: Polyribonucleotide nucleotidyltransferase (699 aa).

The Mg(2+) site is built by Asp-485 and Asp-491. One can recognise a KH domain in the interval 552 to 611 (PRITTIKINPEKIRDVIGKGGAVIRALTEETGTTIELEDDGTVKIASSNGEATKEAIRRI). Positions 621–689 (GRIYNGKVIR…RQGRVRLSIK (69 aa)) constitute an S1 motif domain.

The protein belongs to the polyribonucleotide nucleotidyltransferase family. In terms of assembly, component of the RNA degradosome, which is a multiprotein complex involved in RNA processing and mRNA degradation. The cofactor is Mg(2+).

It localises to the cytoplasm. The catalysed reaction is RNA(n+1) + phosphate = RNA(n) + a ribonucleoside 5'-diphosphate. Functionally, involved in mRNA degradation. Catalyzes the phosphorolysis of single-stranded polyribonucleotides processively in the 3'- to 5'-direction. The chain is Polyribonucleotide nucleotidyltransferase from Shewanella sp. (strain MR-7).